Here is a 392-residue protein sequence, read N- to C-terminus: Pannexin-3 (392 aa).

The Cytoplasmic segment spans residues 1 to 39; the sequence is MSLAHTAAEYMLSDALLPDRRGSRLKGLRLELPLDKMVK. The helical transmembrane segment at 40–60 threads the bilayer; that stretch reads FVTVGFPLLLMSLAFAQEFSS. Residues 61 to 113 lie on the Extracellular side of the membrane; sequence GSPISCFSPSNFSVRQAVFVDSSCWDSLAHYKQDEAGQYTVKSLWPHKALPYS. Asn71 carries N-linked (GlcNAc...) asparagine glycosylation. A helical membrane pass occupies residues 114–134; it reads LLALAVAMYLPVLLWQYAAVP. The Cytoplasmic segment spans residues 135 to 215; it reads ALSSDLLFII…VATYLLRNAL (81 aa). Residues 216-236 traverse the membrane as a helical segment; the sequence is LLLFTSATYLYLGHFHLDVFF. The Extracellular segment spans residues 237–267; sequence QEEFSCSIKTGLLHEETHVPELITCRLTSLS. A helical transmembrane segment spans residues 268 to 288; it reads VFQIVSVSSVAIYTVLVPVII. The Cytoplasmic portion of the chain corresponds to 289-392; it reads YNLTRLCRWD…LTQHTYDEHP (104 aa).

Belongs to the pannexin family. In terms of assembly, homoheptameric. As to expression, skin.

Its subcellular location is the cell membrane. The protein resides in the cell junction. It is found in the gap junction. It localises to the endoplasmic reticulum membrane. The enzyme catalyses Ca(2+)(in) = Ca(2+)(out). The catalysed reaction is ATP(in) = ATP(out). Its function is as follows. Regulator of osteoblast differentiation by functionning as a Ca(2+) channel in the endoplasmic reticulum which regulates calmodulin (CaM) pathways. Allows ATP release into the extracellular space and activation or purinergic receptors. The protein is Pannexin-3 (Panx3) of Rattus norvegicus (Rat).